A 349-amino-acid chain; its full sequence is tRNA uridine(34) hydroxylase (349 aa).

Residues 146 to 240 (DDPDAVFIDM…YARRAREQGL (95 aa)) form the Rhodanese domain. The active-site Cysteine persulfide intermediate is the Cys-200. The segment covering 316-328 (EEQRRRRAGRENG) has biased composition (basic and acidic residues). Residues 316–349 (EEQRRRRAGRENGNKIFNKSRGRLNTKLGIPDPE) form a disordered region.

This sequence belongs to the TrhO family.

The enzyme catalyses uridine(34) in tRNA + AH2 + O2 = 5-hydroxyuridine(34) in tRNA + A + H2O. In terms of biological role, catalyzes oxygen-dependent 5-hydroxyuridine (ho5U) modification at position 34 in tRNAs. The polypeptide is tRNA uridine(34) hydroxylase (Enterobacter sp. (strain 638)).